The primary structure comprises 428 residues: Histidinol dehydrogenase (428 aa).

Residues Ser-234, Gln-256, and His-259 each contribute to the substrate site. 2 residues coordinate Zn(2+): Gln-256 and His-259. Catalysis depends on proton acceptor residues Glu-323 and His-324. Substrate is bound by residues His-324, Asp-357, Glu-411, and His-416. Residue Asp-357 coordinates Zn(2+). Residue His-416 participates in Zn(2+) binding.

The protein belongs to the histidinol dehydrogenase family. Zn(2+) is required as a cofactor.

The catalysed reaction is L-histidinol + 2 NAD(+) + H2O = L-histidine + 2 NADH + 3 H(+). It functions in the pathway amino-acid biosynthesis; L-histidine biosynthesis; L-histidine from 5-phospho-alpha-D-ribose 1-diphosphate: step 9/9. Catalyzes the sequential NAD-dependent oxidations of L-histidinol to L-histidinaldehyde and then to L-histidine. The sequence is that of Histidinol dehydrogenase from Campylobacter jejuni subsp. jejuni serotype O:2 (strain ATCC 700819 / NCTC 11168).